The following is a 759-amino-acid chain: DNA topoisomerase 3 (759 aa).

One can recognise a Toprim domain in the interval 3–147; the sequence is RALFVAEKND…RLDIFRARFS (145 aa). A Topo IA-type catalytic domain is found at 165–590; the sequence is DEKTVAAVDC…EQIGKYRAIF (426 aa). Tyr-334 serves as the catalytic O-(5'-phospho-DNA)-tyrosine intermediate. The segment at 609 to 715 is disordered; sequence DKNNQAGGGP…KEQEEEEEVF (107 aa). Over residues 614–639 the composition is skewed to gly residues; the sequence is AGGGPGGPGGGGGPPRGPGGGGGGGP. Residues 640 to 649 show a composition bias toward pro residues; it reads TGPPAPPKPP. Residues Cys-716, Cys-718, Cys-743, and Cys-753 each coordinate Zn(2+). The segment at 716–759 adopts a GRF-type zinc-finger fold; the sequence is CQCPEPMRAVTKVVQKEGPNKGKKFYTCSLPYTSSEKCNFFKWA.

The protein belongs to the type IA topoisomerase family. Component of the BTR double Holliday Junction dissolution complex composed of at least him-6, top-3, rmh-1 and rmif-2, which is involved in double strand break repair in the germline. May interact with rmh-1.

Its subcellular location is the nucleus. The enzyme catalyses ATP-independent breakage of single-stranded DNA, followed by passage and rejoining.. In terms of biological role, component of the BTR double Holliday Junction dissolution complex, which is involved in homologous recombination during meiotic double strand break in the germline. Releases the supercoiling and torsional tension of DNA introduced during the DNA replication and transcription by transiently cleaving and rejoining one strand of the DNA duplex. Introduces a single-strand break via transesterification at a target site in duplex DNA. The scissile phosphodiester is attacked by the catalytic tyrosine of the enzyme, resulting in the formation of a DNA-(5'-phosphotyrosyl)-enzyme intermediate and the expulsion of a 3'-OH DNA strand. The free DNA strand than undergoes passage around the unbroken strand thus removing DNA supercoils. Finally, in the religation step, the DNA 3'-OH attacks the covalent intermediate to expel the active-site tyrosine and restore the DNA phosphodiester backbone. The sequence is that of DNA topoisomerase 3 from Caenorhabditis elegans.